Here is a 219-residue protein sequence, read N- to C-terminus: Protein VERNALIZATION 2 (219 aa).

A CCT domain is found at 138–180 (REAKVMRYREKKKRRRYEKQIRYESRKAYAEMRPRVKGRFAKV).

As to expression, mainly expressed in leaves, and at low levels in the shoot apical meristem (SAM).

The protein localises to the nucleus. Involved in the regulation of vernalization; this process in essential for flowering in cv. Bd29-1 but seems do not occur in cv. Bd21. This chain is Protein VERNALIZATION 2, found in Brachypodium distachyon (Purple false brome).